The following is a 603-amino-acid chain: Geraniol synthase Tps-5031G8, chloroplastic (603 aa).

The N-terminal 35 residues, 1–35, are a transit peptide targeting the chloroplast; sequence MCSISQKVVIGLNKAAANNCLQNLDRRGFKTRRVS. Arg319, Asp356, Asp360, Arg497, and Asp500 together coordinate (2E)-geranyl diphosphate. 2 residues coordinate Mg(2+): Asp356 and Asp360. The DDXXD motif signature appears at 356–360; sequence DDVYD. Residues Asp500, Thr504, and Glu508 each coordinate Mg(2+).

This sequence belongs to the terpene synthase family. Tpsb subfamily. Monomer. Mg(2+) serves as cofactor. It depends on Mn(2+) as a cofactor.

The protein localises to the plastid. It is found in the chloroplast. The enzyme catalyses (2E)-geranyl diphosphate + H2O = (2E)-geraniol + diphosphate. It functions in the pathway secondary metabolite biosynthesis; terpenoid biosynthesis. In terms of biological role, monoterpene synthase (mono-TPS) involved in the biosynthesis of monoterpenes natural products. Catalyzes the conversion of (2E)-geranyl diphosphate (GPP) into geraniol. The polypeptide is Geraniol synthase Tps-5031G8, chloroplastic (Perilla frutescens var. hirtella (Perilla citriodora)).